The following is a 138-amino-acid chain: Cysteine desulfuration protein SufE (138 aa).

Residue Cys51 is the Cysteine persulfide intermediate of the active site.

The protein belongs to the SufE family. As to quaternary structure, homodimer. Interacts with SufS.

The protein localises to the cytoplasm. It participates in cofactor biosynthesis; iron-sulfur cluster biosynthesis. Functionally, participates in cysteine desulfuration mediated by SufS. Cysteine desulfuration mobilizes sulfur from L-cysteine to yield L-alanine and constitutes an essential step in sulfur metabolism for biosynthesis of a variety of sulfur-containing biomolecules. Functions as a sulfur acceptor for SufS, by mediating the direct transfer of the sulfur atom from the S-sulfanylcysteine of SufS, an intermediate product of cysteine desulfuration process. The chain is Cysteine desulfuration protein SufE from Klebsiella pneumoniae (strain 342).